The primary structure comprises 522 residues: Target of rapamycin complex 2 subunit MAPKAP1 (522 aa).

The residue at position 2 (Ala-2) is an N-acetylalanine. An interaction with MAP3K2 region spans residues 2–184 (AFLDNPTIIL…KKIDVYLPLH (183 aa)). Positions 2 to 267 (AFLDNPTIIL…GFSTLALVEK (266 aa)) are interaction with NBN. The tract at residues 38–59 (LEKTHPPSVPGDSGSEVQGSSG) is disordered. The residue at position 86 (Thr-86) is a Phosphothreonine; by PKB/AKT1 and RPS6KB1. Ser-128 is modified (phosphoserine; by PKC). In terms of domain architecture, CRIM spans 139 to 267 (QSILSVRLEQ…GFSTLALVEK (129 aa)). Residues Ser-186, Ser-315, and Ser-356 each carry the phosphoserine modification. The interval 279 to 353 (LFVRINAAHG…QNAWEFCLVR (75 aa)) is SIN1-type RBD. Positions 382 to 487 (HYKSFKVSMI…IVLKVNYILE (106 aa)) constitute an SIN1-type PH domain. Arg-393 is an a 1,2-diacyl-sn-glycero-3-phospho-(1D-myo-inositol-3,4,5-trisphosphate) binding site. The residue at position 398 (Thr-398) is a Phosphothreonine; by RPS6KB1. Residues Lys-428 and Lys-464 each coordinate a 1,2-diacyl-sn-glycero-3-phospho-(1D-myo-inositol-3,4,5-trisphosphate). The interval 468–522 (FESDAATVSEIVLKVNYILESRASTARADYLAQKQRKLNRRTSFSFQKEKKSGQQ) is interaction with ATF2. Ser-510 is modified (phosphoserine).

The protein belongs to the SIN1 family. In terms of assembly, component of the mechanistic target of rapamycin complex 2 (mTORC2), consisting in two heterotretramers composed of MTOR, MLST8, RICTOR and MAPKAP1/SIN1. The mTORC2 core complex associates with PRR5/PROTOR1 and/or PRR5L/PROTOR2. Contrary to mTORC1, mTORC2 does not bind to and is not sensitive to FKBP12-rapamycin. Interacts with MAP3K2. Interacts with ATF2. Interacts with MAPK8. Interacts with GTP-bound HRAS and KRAS; inhibiting their activity. Interacts with IFNAR2. In terms of processing, phosphorylation at Ser-128 by PKC promotes relocalization to the perinuclear region, where the mTORC2 complex specifically mediates phosphorylation of SGK1. Phosphorylated at Thr-86 by AKT1 or RPS6KB1 in the presence of growth factors; the effect of this phosphorylation is however unclear. According to two studies, phosphorylation at Thr-86 by AKT1 is part of a positive feedback loop that increases mTORC2 activation. According to another study, phosphorylation at Thr-86 and Thr-398 by RPS6KB1 promotes dissociation from the mTORC2 complex, leading to inhibit mTORC2 signaling. In terms of tissue distribution, uniquitously expressed, with highest levels in testis, kidney and liver. Present in renal tubule cells (at protein level).

The protein localises to the cell membrane. It is found in the endoplasmic reticulum membrane. It localises to the early endosome membrane. The protein resides in the late endosome membrane. Its subcellular location is the lysosome membrane. The protein localises to the golgi apparatus membrane. It is found in the mitochondrion outer membrane. It localises to the cytoplasm. The protein resides in the perinuclear region. Its subcellular location is the nucleus. Phosphatidylinositol 3,4,5-trisphosphate (PI(3,4,5)P3) promotes MTOR activation by relieving MAPKAP1/SIN1-mediated inhibition of MTOR that takes place in absence of PI(3,4,5)P3. Its function is as follows. Component of the mechanistic target of rapamycin complex 2 (mTORC2), which transduces signals from growth factors to pathways involved in proliferation, cytoskeletal organization, lipogenesis and anabolic output. In response to growth factors, mTORC2 phosphorylates and activates AGC protein kinase family members, including AKT (AKT1, AKT2 and AKT3), PKC (PRKCA, PRKCB and PRKCE) and SGK1. In contrast to mTORC1, mTORC2 is nutrient-insensitive. Within the mTORC2 complex, MAPKAP1/SIN1 acts as a substrate adapter which recognizes and binds AGC protein kinase family members for phosphorylation by MTOR. mTORC2 plays a critical role in AKT1 activation by mediating phosphorylation of different sites depending on the context, such as 'Thr-450', 'Ser-473', 'Ser-477' or 'Thr-479', facilitating the phosphorylation of the activation loop of AKT1 on 'Thr-308' by PDPK1/PDK1 which is a prerequisite for full activation. mTORC2 catalyzes the phosphorylation of SGK1 at 'Ser-422' and of PRKCA on 'Ser-657'. The mTORC2 complex also phosphorylates various proteins involved in insulin signaling, such as FBXW8 and IGF2BP1. mTORC2 acts upstream of Rho GTPases to regulate the actin cytoskeleton, probably by activating one or more Rho-type guanine nucleotide exchange factors. mTORC2 promotes the serum-induced formation of stress-fibers or F-actin. MAPKAP1 inhibits MAP3K2 by preventing its dimerization and autophosphorylation. Inhibits HRAS and KRAS independently of mTORC2 complex. Enhances osmotic stress-induced phosphorylation of ATF2 and ATF2-mediated transcription. Involved in ciliogenesis, regulates cilia length through its interaction with CCDC28B independently of mTORC2 complex. The polypeptide is Target of rapamycin complex 2 subunit MAPKAP1 (Mus musculus (Mouse)).